The sequence spans 1143 residues: Disease resistance protein Piks-1 (1143 aa).

The structured coiled coil (CC) domain stretch occupies residues 1-190 (MEAAAMAVTA…PLRIMGGEMQ (190 aa)). The 70-residue stretch at 189–258 (MQKIVFKIPM…KVGPAMFLEV (70 aa)) folds into the HMA domain. The segment at 191–264 (KIVFKIPMVD…FLEVSQAKED (74 aa)) is HMA-like domain. The 289-residue stretch at 282-570 (HEVKTICILG…WIAEGFVSEE (289 aa)) folds into the NB-ARC domain. 10 LRR repeats span residues 681-706 (FKRL…ICEQ), 708-731 (SLRV…MRKL), 732-754 (KHLE…IGEL), 756-777 (HLRI…IREL), 778-800 (QHLH…VGKL), 802-823 (NLKI…IGEL), 824-848 (NHLQ…QISQ), 945-968 (MPNL…INGT), 979-1002 (DSRV…EFKF), and 1004-1027 (AGPA…VFRC).

It belongs to the disease resistance NB-LRR family. In terms of assembly, interacts with AVR-Pik through its N-terminal part containing the HMA-like domain.

Functionally, disease resistance (R) protein that specifically recognizes the AVR-Pik effector avirulence protein from M.oryzae. Resistance proteins guard the plant against pathogens that contain an appropriate avirulence protein via an indirect interaction with this avirulence protein. That triggers a defense system including the hypersensitive response, which restricts the pathogen growth. This Oryza sativa subsp. japonica (Rice) protein is Disease resistance protein Piks-1.